Consider the following 303-residue polypeptide: N-acetyl-D-glucosamine kinase (303 aa).

Residues 4–11 (GFDIGGTK) and 133–140 (GVGGGLIF) each bind ATP. 4 residues coordinate Zn(2+): His-157, Cys-177, Cys-179, and Cys-184.

It belongs to the ROK (NagC/XylR) family. NagK subfamily.

It carries out the reaction N-acetyl-D-glucosamine + ATP = N-acetyl-D-glucosamine 6-phosphate + ADP + H(+). Its pathway is cell wall biogenesis; peptidoglycan recycling. Its function is as follows. Catalyzes the phosphorylation of N-acetyl-D-glucosamine (GlcNAc) derived from cell-wall degradation, yielding GlcNAc-6-P. The protein is N-acetyl-D-glucosamine kinase of Escherichia coli O139:H28 (strain E24377A / ETEC).